Here is a 210-residue protein sequence, read N- to C-terminus: Transcriptional regulator MxiE (210 aa).

Residues 99-199 (YHLVLYLLRT…GFSARELSNI (101 aa)) enclose the HTH araC/xylS-type domain. 2 DNA-binding regions (H-T-H motif) span residues 118-139 (KSLT…RKAL) and 166-189 (ITSA…KTRL).

Functionally, necessary for the secretion of ipa invasins. Probable transcriptional regulatory protein. In Shigella flexneri, this protein is Transcriptional regulator MxiE (mxiE).